The sequence spans 687 residues: Chloride channel protein ClC-Kb (687 aa).

Topologically, residues 1 to 50 (MEEFVGLREGSSGNPVTLQELWGPCPRIRRGIRGGLEWLKQKLFRLGEDW) are cytoplasmic. The next 2 membrane-spanning stretches (helical) occupy residues 51-82 (YFLM…QWLY) and 91-111 (LRYL…SGFS). The helical intramembrane region spans 116–127 (PSSGGSGIPEVK). Ser-121 contributes to the chloride binding site. 2 helical membrane-spanning segments follow: residues 141–160 (IKNF…CGST) and 161–180 (LFLG…AAYL). N-linked (GlcNAc...) asparagine glycosylation is present at Asn-193. Positions 203 to 224 (AAAAVGVATVFAAPFSGVLFSI) form an intramembrane region, helical. The helical transmembrane segment at 236 to 255 (YWRGFFAATCGAFMFRLLAV) threads the bilayer. Glu-259, Glu-261, Asp-278, and Glu-281 together coordinate Ca(2+). A run of 2 helical transmembrane segments spans residues 282–310 (IFFF…FGFI) and 325–342 (PVYS…TYPP). The segment at residues 349–360 (ASRLSMKQHLDS) is an intramembrane region (helical). A run of 2 helical transmembrane segments spans residues 400-420 (GTLA…TTIP) and 421-440 (MPAG…GRLF). Phe-426 is a binding site for chloride. An intramembrane region (helical) is located at residues 464-496 (GGYALAGAAAFSGAVTHTISTALLAFEVTGQIV). The chain crosses the membrane as a helical span at residues 500–520 (PVLMAVLAANAIAQSCQPSFY). At 521–687 (DGTVIVKKLP…SNLTNPPAPK (167 aa)) the chain is on the cytoplasmic side. CBS domains follow at residues 551–609 (MNHS…EPPS) and 626–684 (CPTE…TNPP).

It belongs to the chloride channel (TC 2.A.49) family. CLCNKB subfamily. As to quaternary structure, homodimer. Interacts with BSND. In terms of processing, N-glycosylated.

Its subcellular location is the basolateral cell membrane. It carries out the reaction chloride(in) = chloride(out). It catalyses the reaction iodide(out) = iodide(in). The enzyme catalyses nitrate(in) = nitrate(out). The catalysed reaction is bromide(in) = bromide(out). Its activity is regulated as follows. Activated by extracellular Ca(2+) and inhibited by extracellular acidic pH. Anion-selective channel permeable to small monovalent anions with ion selectivity for chloride &gt; bromide &gt; nitrate &gt; iodide. Forms a homodimeric channel where each subunit has its own ion conduction pathway. May conduct double-barreled currents controlled by two types of gates, two fast gates that control each subunit independently and a slow common gate that opens and shuts off both subunits simultaneously. Assembles with the regulatory subunit BSND/Barttin for sorting at the basolateral plasma membrane domain and functional switch to the ion conducting state. CLCNKB:BSND channels display mostly a linear current-voltage relationship controlled by common gate. Mediates chloride conductance along nephron segments, namely the thick ascending limb of Henle's loop, convoluted tubule and the collecting duct, contributing to the maintenance of systemic acid-base and electrolyte homeostasis. Conducts chloride currents in the stria vascularis of the inner ear to establish the endocochlear potential necessary for normal hearing. This is Chloride channel protein ClC-Kb from Homo sapiens (Human).